The sequence spans 109 residues: Large ribosomal subunit protein uL22 (109 aa).

Belongs to the universal ribosomal protein uL22 family. Part of the 50S ribosomal subunit.

Its function is as follows. This protein binds specifically to 23S rRNA; its binding is stimulated by other ribosomal proteins, e.g. L4, L17, and L20. It is important during the early stages of 50S assembly. It makes multiple contacts with different domains of the 23S rRNA in the assembled 50S subunit and ribosome. In terms of biological role, the globular domain of the protein is located near the polypeptide exit tunnel on the outside of the subunit, while an extended beta-hairpin is found that lines the wall of the exit tunnel in the center of the 70S ribosome. This chain is Large ribosomal subunit protein uL22, found in Psychrobacter sp. (strain PRwf-1).